Here is a 378-residue protein sequence, read N- to C-terminus: Probable E3 ubiquitin-protein ligase LUL3 (378 aa).

Residues 1–21 are compositionally biased toward basic residues; the sequence is MGISLSKRRRDNNNNHHHPHH. Positions 1 to 79 are disordered; the sequence is MGISLSKRRR…PPSQISYRPY (79 aa). The N-myristoyl glycine moiety is linked to residue glycine 2. Composition is skewed to pro residues over residues 29–38 and 55–72; these read DPPPQQPPPQ and SLPP…PPPS. Positions 164–283 are DAR2 domain; sequence FVFDALFDGS…GSFKVKVMKQ (120 aa). The segment at 321-360 adopts an RING-type; atypical zinc-finger fold; the sequence is CVICLTEPKDTAVMPCRHLCLCSDCAEELRFQTNKCPICR.

Belongs to the RING-type zinc finger family. LOG2 subfamily. Post-translationally, myristoylated (in vitro).

The catalysed reaction is S-ubiquitinyl-[E2 ubiquitin-conjugating enzyme]-L-cysteine + [acceptor protein]-L-lysine = [E2 ubiquitin-conjugating enzyme]-L-cysteine + N(6)-ubiquitinyl-[acceptor protein]-L-lysine.. It functions in the pathway protein modification; protein ubiquitination. Acts as an E3 ubiquitin-protein ligase, or as part of E3 complex, which accepts ubiquitin from specific E2 ubiquitin-conjugating enzymes and then transfers it to substrates (in vitro). The sequence is that of Probable E3 ubiquitin-protein ligase LUL3 (LUL3) from Arabidopsis thaliana (Mouse-ear cress).